We begin with the raw amino-acid sequence, 311 residues long: 33 kDa chaperonin (311 aa).

Cystine bridges form between cysteine 240–cysteine 242 and cysteine 273–cysteine 276.

The protein belongs to the HSP33 family. Under oxidizing conditions two disulfide bonds are formed involving the reactive cysteines. Under reducing conditions zinc is bound to the reactive cysteines and the protein is inactive.

Its subcellular location is the cytoplasm. Redox regulated molecular chaperone. Protects both thermally unfolding and oxidatively damaged proteins from irreversible aggregation. Plays an important role in the bacterial defense system toward oxidative stress. This Trichodesmium erythraeum (strain IMS101) protein is 33 kDa chaperonin.